The primary structure comprises 37 residues: Large ribosomal subunit protein bL36 (37 aa).

The protein belongs to the bacterial ribosomal protein bL36 family.

This Synechococcus sp. (strain RCC307) protein is Large ribosomal subunit protein bL36.